The primary structure comprises 259 residues: Global transcriptional regulator CodY (259 aa).

A GAF domain region spans residues 1-155 (MALLQKTRKI…GATVVGMEIL (155 aa)). The H-T-H motif DNA-binding region spans 203-222 (ASKIADRVGITRSVIVNALR). The residue at position 215 (Ser-215) is a Phosphoserine.

Belongs to the CodY family.

Its subcellular location is the cytoplasm. Its function is as follows. DNA-binding global transcriptional regulator which is involved in the adaptive response to starvation and acts by directly or indirectly controlling the expression of numerous genes in response to nutrient availability. During rapid exponential growth, CodY is highly active and represses genes whose products allow adaptation to nutrient depletion. The chain is Global transcriptional regulator CodY from Bacillus licheniformis (strain ATCC 14580 / DSM 13 / JCM 2505 / CCUG 7422 / NBRC 12200 / NCIMB 9375 / NCTC 10341 / NRRL NRS-1264 / Gibson 46).